Here is a 126-residue protein sequence, read N- to C-terminus: UPF0538 protein C2orf76 homolog (126 aa).

It belongs to the UPF0538 family.

The chain is UPF0538 protein C2orf76 homolog from Mus musculus (Mouse).